We begin with the raw amino-acid sequence, 362 residues long: Probable dual-specificity RNA methyltransferase RlmN (362 aa).

Catalysis depends on Glu91, which acts as the Proton acceptor. Residues Gln97–Arg329 form the Radical SAM core domain. A disulfide bridge links Cys104 with Cys340. Residues Cys111, Cys115, and Cys118 each contribute to the [4Fe-4S] cluster site. Residues Gly163–Glu164, Ser195, Ser218–His220, and Asn296 each bind S-adenosyl-L-methionine. Cys340 (S-methylcysteine intermediate) is an active-site residue.

It belongs to the radical SAM superfamily. RlmN family. [4Fe-4S] cluster serves as cofactor.

The protein localises to the cytoplasm. It carries out the reaction adenosine(2503) in 23S rRNA + 2 reduced [2Fe-2S]-[ferredoxin] + 2 S-adenosyl-L-methionine = 2-methyladenosine(2503) in 23S rRNA + 5'-deoxyadenosine + L-methionine + 2 oxidized [2Fe-2S]-[ferredoxin] + S-adenosyl-L-homocysteine. The enzyme catalyses adenosine(37) in tRNA + 2 reduced [2Fe-2S]-[ferredoxin] + 2 S-adenosyl-L-methionine = 2-methyladenosine(37) in tRNA + 5'-deoxyadenosine + L-methionine + 2 oxidized [2Fe-2S]-[ferredoxin] + S-adenosyl-L-homocysteine. Specifically methylates position 2 of adenine 2503 in 23S rRNA and position 2 of adenine 37 in tRNAs. The chain is Probable dual-specificity RNA methyltransferase RlmN from Streptococcus gordonii (strain Challis / ATCC 35105 / BCRC 15272 / CH1 / DL1 / V288).